The following is a 211-amino-acid chain: Urease accessory protein UreF (211 aa).

The tract at residues 71-93 (DDADRETDARTPAPAARHASRSQ) is disordered.

Belongs to the UreF family. As to quaternary structure, ureD, UreF and UreG form a complex that acts as a GTP-hydrolysis-dependent molecular chaperone, activating the urease apoprotein by helping to assemble the nickel containing metallocenter of UreC. The UreE protein probably delivers the nickel.

The protein localises to the cytoplasm. In terms of biological role, required for maturation of urease via the functional incorporation of the urease nickel metallocenter. This Mycobacterium tuberculosis (strain ATCC 25177 / H37Ra) protein is Urease accessory protein UreF.